Here is a 167-residue protein sequence, read N- to C-terminus: Claudin domain-containing protein 2 (167 aa).

4 helical membrane-spanning segments follow: residues 7–27 (LQSG…LSTA), 59–79 (LAVT…GMVM), 96–116 (TSAF…GYTV), and 134–154 (WLAL…DMIM).

It belongs to the PMP-22/EMP/MP20 family.

The protein resides in the membrane. This is Claudin domain-containing protein 2 (CLDND2) from Homo sapiens (Human).